The sequence spans 291 residues: Dihydroorotate dehydrogenase B (NAD(+)), catalytic subunit (291 aa).

FMN is bound by residues S17 and 42-43 (KT). Substrate is bound by residues K42, 67-71 (NAIGL), and N118. N118 contributes to the FMN binding site. S121 functions as the Nucleophile in the catalytic mechanism. Residues K153 and I178 each contribute to the FMN site. 179-180 (NT) serves as a coordination point for substrate. Residues G204, 230-231 (GG), and 252-253 (GT) each bind FMN.

Belongs to the dihydroorotate dehydrogenase family. Type 1 subfamily. As to quaternary structure, heterotetramer of 2 PyrK and 2 PyrD type B subunits. FMN serves as cofactor.

It is found in the cytoplasm. It catalyses the reaction (S)-dihydroorotate + NAD(+) = orotate + NADH + H(+). It functions in the pathway pyrimidine metabolism; UMP biosynthesis via de novo pathway; orotate from (S)-dihydroorotate (NAD(+) route): step 1/1. Catalyzes the conversion of dihydroorotate to orotate with NAD(+) as electron acceptor. The polypeptide is Dihydroorotate dehydrogenase B (NAD(+)), catalytic subunit (pyrD) (Sulfolobus acidocaldarius (strain ATCC 33909 / DSM 639 / JCM 8929 / NBRC 15157 / NCIMB 11770)).